The sequence spans 103 residues: UPF0145 protein BT9727_3206 (103 aa).

This sequence belongs to the UPF0145 family.

The protein is UPF0145 protein BT9727_3206 of Bacillus thuringiensis subsp. konkukian (strain 97-27).